Here is a 23-residue protein sequence, read N- to C-terminus: FWGAAAKMLGKALPGLISMFQKN.

The protein belongs to the non-disulfide-bridged peptide (NDBP) superfamily. Medium-length antimicrobial peptide (group 3) family. Ponericin-W subfamily. As to expression, expressed by the venom gland.

The protein resides in the secreted. Its subcellular location is the target cell membrane. Functionally, membrane-perturbating peptide with multiple activities. It is insecticidal, since it induces contractile paralysis in insects (L.cuprina) during several hours, and death after 24 hours. It shows antibacterial activity with higher activity against Gram-positive than Gram-negative bacteria. It is also antiparasitic, since it potently inhibits the larval development of the major pathogenic nematode of ruminants (H.contortus, IC(50)=5.1 uM), but fails to reduce the motility of adult males of the other nematode B.malayi. It also shows cytotoxic activity against HEK293 cells (EC(50)=12-14 uM) and induces hemolysis in human erythrocytes (EC(50)=28.6-48.2 uM). In addition, it causes an important increase in intracellular calcium concentration on neuronal and epithelial cell lines, which supports a non-specific membrane perturbation mechanism of action. In vivo, it induces pain by intraplantar injection into mice, suggesting a defensive function against vertebrate predators. The chain is M-poneritoxin-Nc1a from Neoponera commutata (Large hunting ant).